A 224-amino-acid polypeptide reads, in one-letter code: Response regulator protein GraR (224 aa).

The Response regulatory domain occupies 2–115 (QILLVEDDNT…VLIAKLQAIY (114 aa)). Asp-51 carries the 4-aspartylphosphate modification. A DNA-binding region (ompR/PhoB-type) is located at residues 126–224 (KRTLTWQDAV…KVGKGYMAHE (99 aa)). A phosphothreonine mark is found at Thr-128, Thr-130, and Thr-149.

As to quaternary structure, interacts with GraX. In terms of processing, phosphorylated by GraS. Phosphorylated by Stk1; phosphorylation increases the DNA-binding activity of GraR.

It is found in the cytoplasm. In terms of biological role, member of the two-component regulatory system GraR/GraS involved in resistance against cationic antimicrobial peptides (CAMPs). Upon phosphorylation by GraS, functions as a transcription regulator by direct binding to promoter regions of target genes such as adhesins, exoproteins, transporters, toxins, and proteins involved in cell wall synthesis. Down-regulates the expression of many genes involved in RNA and amino acid synthesis or glycolysis. This is Response regulator protein GraR (graR) from Staphylococcus aureus (strain Mu3 / ATCC 700698).